A 239-amino-acid polypeptide reads, in one-letter code: Xyloglucan-specific endo-beta-1,4-glucanase A (239 aa).

A signal peptide spans 1-14 (MKLLALSLASLASA). Asn172 carries N-linked (GlcNAc...) asparagine glycosylation.

Belongs to the glycosyl hydrolase 12 (cellulase H) family.

It localises to the secreted. It catalyses the reaction xyloglucan + H2O = xyloglucan oligosaccharides.. In terms of biological role, catalyzes endohydrolysis of 1,4-beta-D-glucosidic linkages in xyloglucan with retention of the beta-configuration of the glycosyl residues. Specific for xyloglucan and does not hydrolyze other cell wall components. Active against tamarind xyloglucan. In Emericella nidulans (strain FGSC A4 / ATCC 38163 / CBS 112.46 / NRRL 194 / M139) (Aspergillus nidulans), this protein is Xyloglucan-specific endo-beta-1,4-glucanase A (xgeA).